The sequence spans 201 residues: Translation machinery-associated protein 22 (201 aa).

The 72-residue stretch at 94–165 folds into the SUI1 domain; sequence VTIKRIERNK…EARAYIEKLL (72 aa).

It belongs to the DENR family. In terms of assembly, interacts with the 40S ribosomal subunit.

It localises to the cytoplasm. This Meyerozyma guilliermondii (strain ATCC 6260 / CBS 566 / DSM 6381 / JCM 1539 / NBRC 10279 / NRRL Y-324) (Yeast) protein is Translation machinery-associated protein 22 (TMA22).